The following is a 295-amino-acid chain: MIVIDGKKVSLELKNELRERVEALNAKCGKVPGLTVIIVGEDPASQVYVRNKAKSCKEIGMNSTVIELPADTTQEHLLKIINDLNNDDTVHGILVQQPMPKQIDEFTITLAIDPAKDVDGFHPENLGRLVMGHLDKCFVSCTPYGILELLGRYNIETKGKHCVVVGRSNIVGKPMANLMLQKLKESNCTVTICHSATPNITEFTKQADILIAAIGKANFITADMVKAGAVVIDVGINRVDDASAKNGYRLVGDVEYAGVSALASAITPVPGGVGPMTIAMLLKNTVQSFQRVNGL.

Residues 166–168 (GRS), S195, and I236 each bind NADP(+).

Belongs to the tetrahydrofolate dehydrogenase/cyclohydrolase family. Homodimer.

It carries out the reaction (6R)-5,10-methylene-5,6,7,8-tetrahydrofolate + NADP(+) = (6R)-5,10-methenyltetrahydrofolate + NADPH. The enzyme catalyses (6R)-5,10-methenyltetrahydrofolate + H2O = (6R)-10-formyltetrahydrofolate + H(+). The protein operates within one-carbon metabolism; tetrahydrofolate interconversion. Catalyzes the oxidation of 5,10-methylenetetrahydrofolate to 5,10-methenyltetrahydrofolate and then the hydrolysis of 5,10-methenyltetrahydrofolate to 10-formyltetrahydrofolate. The polypeptide is Bifunctional protein FolD (Chlorobium chlorochromatii (strain CaD3)).